The chain runs to 152 residues: Siroheme decarboxylase beta subunit (152 aa).

Belongs to the Ahb/Nir family. In terms of assembly, forms a heterodimer composed of AhbA and AhbB.

The catalysed reaction is siroheme + 2 H(+) = 12,18-didecarboxysiroheme + 2 CO2. The protein operates within porphyrin-containing compound metabolism; protoheme biosynthesis. Its activity is regulated as follows. Binds heme b. The redox state of the heme b modulates the activity of the enzyme. Activity is stimulated by sodium dithionite. In terms of biological role, involved in siroheme-dependent heme b biosynthesis. Catalyzes the decarboxylation of siroheme into didecarboxysiroheme. This is Siroheme decarboxylase beta subunit from Methanosarcina barkeri (strain Fusaro / DSM 804).